The primary structure comprises 103 residues: Phosphoribosyl-ATP pyrophosphatase (103 aa).

Belongs to the PRA-PH family.

Its subcellular location is the cytoplasm. The catalysed reaction is 1-(5-phospho-beta-D-ribosyl)-ATP + H2O = 1-(5-phospho-beta-D-ribosyl)-5'-AMP + diphosphate + H(+). It functions in the pathway amino-acid biosynthesis; L-histidine biosynthesis; L-histidine from 5-phospho-alpha-D-ribose 1-diphosphate: step 2/9. The chain is Phosphoribosyl-ATP pyrophosphatase from Cereibacter sphaeroides (strain KD131 / KCTC 12085) (Rhodobacter sphaeroides).